The sequence spans 445 residues: Tubby-like F-box protein 10 (445 aa).

Residues 57-112 (SRWANLPPELLFDVIKRLEESESNWPARKHVVACASVCRSWRAMCQEIVLGPEICG) form the F-box domain. Low complexity predominate over residues 382–398 (PQPQGTGAAAAPTSAPA). The disordered stretch occupies residues 382 to 401 (PQPQGTGAAAAPTSAPAHPE).

Belongs to the TUB family. Part of a SCF (ASK-cullin-F-box) protein ligase complex. Interacts with SKP1A/ASK1. As to expression, ubiquitous.

It is found in the nucleus. It participates in protein modification; protein ubiquitination. Component of SCF(ASK-cullin-F-box) E3 ubiquitin ligase complexes, which may mediate the ubiquitination and subsequent proteasomal degradation of target proteins. This is Tubby-like F-box protein 10 from Arabidopsis thaliana (Mouse-ear cress).